A 387-amino-acid chain; its full sequence is Natterin-4 (387 aa).

The signal sequence occupies residues 1 to 18; that stretch reads MKLLVLLVTLLVLSWTSA. A propeptide spanning residues 19–46 is cleaved from the precursor; that stretch reads EDVGDQEILQQHNEDNNHKSELGEAAPQ. A compositionally biased stretch (basic and acidic residues) spans 31–40; sequence NEDNNHKSEL. Positions 31-57 are disordered; the sequence is NEDNNHKSELGEAAPQRTDNETSQLGQ.

This sequence belongs to the natterin family. Post-translationally, contains 4 disulfide bonds. As to expression, expressed by the venom gland.

It localises to the secreted. With respect to regulation, inhibited by tissue-kallikrein inhibitor TKI and trasylol. Plasma kallikrein inhibitor PKSI527 and classical inhibitors of serine-, metallo-, thiol- or aspartate-peptidases evokes a minor inhibition of the peptide digestion. Functionally, shows nociceptive, edema-inducing and kininogenase activity with release of kallidin from low molecular weight kininogen. The cleavage occurs at Met-Lys bonds. This is Natterin-4 from Thalassophryne nattereri (Copper Joe toadfish).